A 275-amino-acid chain; its full sequence is Large ribosomal subunit protein uL2 (275 aa).

Positions 223–260 (VAMNPVDHPHGGGEGRTSGGRHPVSPWGLPTKGYKTRS) are disordered.

This sequence belongs to the universal ribosomal protein uL2 family. In terms of assembly, part of the 50S ribosomal subunit. Forms a bridge to the 30S subunit in the 70S ribosome.

Functionally, one of the primary rRNA binding proteins. Required for association of the 30S and 50S subunits to form the 70S ribosome, for tRNA binding and peptide bond formation. It has been suggested to have peptidyltransferase activity; this is somewhat controversial. Makes several contacts with the 16S rRNA in the 70S ribosome. In Legionella pneumophila (strain Lens), this protein is Large ribosomal subunit protein uL2.